Reading from the N-terminus, the 154-residue chain is Transcriptional repressor NrdR (154 aa).

The segment at 3 to 34 (CPFCGANDTKVIDSRLVAEGEQVRRRRECLAC) is a zinc-finger region. Residues 49 to 139 (PRLIKQDGSR…VYRRFQDLNE (91 aa)) enclose the ATP-cone domain.

The protein belongs to the NrdR family. It depends on Zn(2+) as a cofactor.

Functionally, negatively regulates transcription of bacterial ribonucleotide reductase nrd genes and operons by binding to NrdR-boxes. In Pseudomonas syringae pv. syringae (strain B728a), this protein is Transcriptional repressor NrdR.